Here is a 679-residue protein sequence, read N- to C-terminus: Glycine--tRNA ligase beta subunit (679 aa).

This sequence belongs to the class-II aminoacyl-tRNA synthetase family. In terms of assembly, tetramer of two alpha and two beta subunits.

The protein localises to the cytoplasm. It catalyses the reaction tRNA(Gly) + glycine + ATP = glycyl-tRNA(Gly) + AMP + diphosphate. The polypeptide is Glycine--tRNA ligase beta subunit (Streptococcus pyogenes serotype M18 (strain MGAS8232)).